Consider the following 443-residue polypeptide: ATP-dependent protease ATPase subunit HslU (443 aa).

Residues Ile18, Gly60 to Glu65, Asp256, Glu321, and Arg393 each bind ATP.

It belongs to the ClpX chaperone family. HslU subfamily. A double ring-shaped homohexamer of HslV is capped on each side by a ring-shaped HslU homohexamer. The assembly of the HslU/HslV complex is dependent on binding of ATP.

The protein localises to the cytoplasm. Its function is as follows. ATPase subunit of a proteasome-like degradation complex; this subunit has chaperone activity. The binding of ATP and its subsequent hydrolysis by HslU are essential for unfolding of protein substrates subsequently hydrolyzed by HslV. HslU recognizes the N-terminal part of its protein substrates and unfolds these before they are guided to HslV for hydrolysis. The polypeptide is ATP-dependent protease ATPase subunit HslU (Salmonella typhi).